The primary structure comprises 274 residues: Diaminopimelate epimerase (274 aa).

Substrate-binding residues include Asn-11, Gln-44, and Asn-64. Cys-73 serves as the catalytic Proton donor. Substrate-binding positions include 74–75 (GN), Asn-157, Asn-190, and 208–209 (ER). Residue Cys-217 is the Proton acceptor of the active site. A substrate-binding site is contributed by 218–219 (GS).

Belongs to the diaminopimelate epimerase family. In terms of assembly, homodimer.

The protein localises to the cytoplasm. It catalyses the reaction (2S,6S)-2,6-diaminopimelate = meso-2,6-diaminopimelate. The protein operates within amino-acid biosynthesis; L-lysine biosynthesis via DAP pathway; DL-2,6-diaminopimelate from LL-2,6-diaminopimelate: step 1/1. In terms of biological role, catalyzes the stereoinversion of LL-2,6-diaminopimelate (L,L-DAP) to meso-diaminopimelate (meso-DAP), a precursor of L-lysine and an essential component of the bacterial peptidoglycan. In Actinobacillus pleuropneumoniae serotype 3 (strain JL03), this protein is Diaminopimelate epimerase.